The chain runs to 590 residues: Phosphate-repressible phosphate permease pho-4 (590 aa).

Transmembrane regions (helical) follow at residues 6–26 (FDYL…NIGA), 44–64 (YLQA…GVGA), 85–105 (ALLM…LTMA), 118–138 (IMGG…VQWV), 149–169 (VFLA…IIFL), 186–206 (FVMV…LLLW), 220–240 (IAGT…IFLM), and 246–266 (IVIL…PLLL). Residues 267–466 (RRGEVPPPPA…GALPEKGKAD (200 aa)) are Cytoplasmic-facing. Positions 297–361 (ARRAAQNGDS…PQIKTMVGPR (65 aa)) are disordered. Over residues 313–322 (VTSSTSNPSA) the composition is skewed to polar residues. Residues 325-345 (DGEKGATITKDDSSYSHDHSE) are compositionally biased toward basic and acidic residues. 4 consecutive transmembrane segments (helical) span residues 467 to 487 (VPVW…WTYG), 506 to 525 (GFSM…RLKL), 527 to 547 (VSTT…SGTW), and 561 to 581 (GWFI…GIII).

This sequence belongs to the inorganic phosphate transporter (PiT) (TC 2.A.20) family.

The protein resides in the cell membrane. Its activity is regulated as follows. Phosphate transport activity is competitively inhibited by vanadate and arsenate. In terms of biological role, high-affinity transporter for external inorganic phosphate. Acts probably as a sodium-phosphate symporter. Component of the high affinity phosphate transport system II (ptsII) necessary for scavenging phosphorus from the environment under conditions of limiting phosphorus. In Neurospora crassa (strain ATCC 24698 / 74-OR23-1A / CBS 708.71 / DSM 1257 / FGSC 987), this protein is Phosphate-repressible phosphate permease pho-4.